Consider the following 239-residue polypeptide: Ribosomal RNA large subunit methyltransferase E (239 aa).

S-adenosyl-L-methionine contacts are provided by Gly81, Trp83, Asp104, Asp120, and Asp144. Lys184 acts as the Proton acceptor in catalysis.

The protein belongs to the class I-like SAM-binding methyltransferase superfamily. RNA methyltransferase RlmE family.

The protein localises to the cytoplasm. The enzyme catalyses uridine(2552) in 23S rRNA + S-adenosyl-L-methionine = 2'-O-methyluridine(2552) in 23S rRNA + S-adenosyl-L-homocysteine + H(+). Its function is as follows. Specifically methylates the uridine in position 2552 of 23S rRNA at the 2'-O position of the ribose in the fully assembled 50S ribosomal subunit. This is Ribosomal RNA large subunit methyltransferase E from Rhizobium rhizogenes (strain K84 / ATCC BAA-868) (Agrobacterium radiobacter).